Consider the following 407-residue polypeptide: Cytochrome P450-pinF2, plant-inducible (407 aa).

Cysteine 356 is a binding site for heme.

It belongs to the cytochrome P450 family. It depends on heme as a cofactor.

Functionally, not essential for virulence, but may be involved in the detoxification of plant protective agents at the site of wounding. In Rhizobium radiobacter (Agrobacterium tumefaciens), this protein is Cytochrome P450-pinF2, plant-inducible (cyp104).